The primary structure comprises 114 residues: PDZK1-interacting protein 1 (114 aa).

At 1–28 (MSVLSLVVLSLLMALPPASCQQGRGNLQ) the chain is on the extracellular side. Residues 29 to 51 (PWMQGLIAVAVFLVLVAIAFAVN) form a helical membrane-spanning segment. Residues 52–114 (HFWCQEKPAP…EEGKVCSTPM (63 aa)) lie on the Cytoplasmic side of the membrane. At Ser-85 the chain carries Phosphoserine.

This sequence belongs to the PDZK1-interacting protein 1/SMIM24 family. As to quaternary structure, forms a heterodimer (via N-terminal transmembrane helix) with SLC5A2/SGLT2 (via TM13); this interaction enhances SLC5A2 transporter activity. Interacts with PDZK1.

The protein localises to the apical cell membrane. In terms of biological role, auxiliary protein of electrogenic Na(+)-coupled sugar symporter SLC5A2/SGLT2 and SLC5A1/SGLT1. Essential for the transporter activity of SLC5A2/SGLT2 but not SLC5A1/SGLT1. The polypeptide is PDZK1-interacting protein 1 (Bos taurus (Bovine)).